The primary structure comprises 428 residues: 3-phosphoshikimate 1-carboxyvinyltransferase (428 aa).

3 residues coordinate 3-phosphoshikimate: Lys23, Ser24, and Arg28. Lys23 serves as a coordination point for phosphoenolpyruvate. Phosphoenolpyruvate contacts are provided by Gly97 and Arg125. Ser170, Ser171, Gln172, Ser198, Asp314, Asn338, and Lys342 together coordinate 3-phosphoshikimate. Gln172 provides a ligand contact to phosphoenolpyruvate. Residue Asp314 is the Proton acceptor of the active site. Residues Arg346, Arg388, and Lys413 each contribute to the phosphoenolpyruvate site.

It belongs to the EPSP synthase family. As to quaternary structure, monomer.

It is found in the cytoplasm. The enzyme catalyses 3-phosphoshikimate + phosphoenolpyruvate = 5-O-(1-carboxyvinyl)-3-phosphoshikimate + phosphate. It participates in metabolic intermediate biosynthesis; chorismate biosynthesis; chorismate from D-erythrose 4-phosphate and phosphoenolpyruvate: step 6/7. In terms of biological role, catalyzes the transfer of the enolpyruvyl moiety of phosphoenolpyruvate (PEP) to the 5-hydroxyl of shikimate-3-phosphate (S3P) to produce enolpyruvyl shikimate-3-phosphate and inorganic phosphate. This is 3-phosphoshikimate 1-carboxyvinyltransferase from Baumannia cicadellinicola subsp. Homalodisca coagulata.